Reading from the N-terminus, the 181-residue chain is Ribonuclease HII (181 aa).

Residues Met1–Ile181 form the RNase H type-2 domain. Residues Asp6, Glu7, and Asp98 each coordinate a divalent metal cation.

It belongs to the RNase HII family. It depends on Mn(2+) as a cofactor. Mg(2+) serves as cofactor.

Its subcellular location is the cytoplasm. It catalyses the reaction Endonucleolytic cleavage to 5'-phosphomonoester.. In terms of biological role, endonuclease that specifically degrades the RNA of RNA-DNA hybrids. The protein is Ribonuclease HII of Borrelia recurrentis (strain A1).